The following is a 165-amino-acid chain: Glutamyl-tRNA(Gln) amidotransferase subunit F, mitochondrial (165 aa).

A mitochondrion-targeting transit peptide spans 1–19 (MKSILRSTTRNLITSSRRF).

This sequence belongs to the GatF family. In terms of assembly, subunit of the heterotrimeric GatFAB amidotransferase (AdT) complex, composed of A, B and F subunits.

Its subcellular location is the mitochondrion inner membrane. The catalysed reaction is L-glutamyl-tRNA(Gln) + L-glutamine + ATP + H2O = L-glutaminyl-tRNA(Gln) + L-glutamate + ADP + phosphate + H(+). Functionally, allows the formation of correctly charged Gln-tRNA(Gln) through the transamidation of misacylated Glu-tRNA(Gln) in the mitochondria. The reaction takes place in the presence of glutamine and ATP through an activated gamma-phospho-Glu-tRNA(Gln). Required for proper protein synthesis within the mitochondrion. The chain is Glutamyl-tRNA(Gln) amidotransferase subunit F, mitochondrial from Candida albicans (strain SC5314 / ATCC MYA-2876) (Yeast).